Here is a 520-residue protein sequence, read N- to C-terminus: Putative hydrolase Mb2247c (520 aa).

Positions Met1 to Ala34 are cleaved as a signal peptide. A helical transmembrane segment spans residues Phe104–Ala124. An AB hydrolase-1 domain is found at Gly105–Trp403. Ser232 functions as the Nucleophile in the catalytic mechanism. Asp461 is an active-site residue. Residue His488 is the Proton donor of the active site.

The protein belongs to the peptidase S33 family.

Its subcellular location is the cell membrane. In Mycobacterium bovis (strain ATCC BAA-935 / AF2122/97), this protein is Putative hydrolase Mb2247c.